Consider the following 100-residue polypeptide: Cysteine-rich venom protein VAR1 (100 aa).

The first 22 residues, 1 to 22 (MILLKLYLTLAAILCQSRGTTS), serve as a signal peptide directing secretion. The SCP domain maps to 41–81 (NKHNDLRRTVDPPAKNMLKMSWDNIIAESAKRAALRCNQNE).

It belongs to the CRISP family. Post-translationally, contains 8 disulfide bonds. Expressed by the venom gland.

The protein resides in the secreted. Functionally, blocks ryanodine receptors, and potassium channels. The polypeptide is Cysteine-rich venom protein VAR1 (Varanus acanthurus (Ridge-tailed monitor)).